A 385-amino-acid chain; its full sequence is Leucine aminopeptidase 1 (385 aa).

The signal sequence occupies residues 1 to 19 (MKFPNLLSLGVAASTTVLA). The propeptide occupies 20 to 87 (AVPNQKPIGD…FPRTFAQTTV (68 aa)). Asn177 carries an N-linked (GlcNAc...) asparagine glycan. 4 residues coordinate Zn(2+): His185, Asp204, Glu243, and Asp270. An intrachain disulfide couples Cys319 to Cys323. His352 lines the Zn(2+) pocket.

Belongs to the peptidase M28 family. M28E subfamily. In terms of assembly, monomer. The cofactor is Zn(2+).

The protein resides in the secreted. Functionally, extracellular aminopeptidase that allows assimilation of proteinaceous substrates. The polypeptide is Leucine aminopeptidase 1 (LAP1) (Ajellomyces capsulatus (strain H88) (Darling's disease fungus)).